A 206-amino-acid polypeptide reads, in one-letter code: ATP-dependent Clp protease proteolytic subunit 2 (206 aa).

Ser-100 serves as the catalytic Nucleophile. His-125 is an active-site residue.

It belongs to the peptidase S14 family. As to quaternary structure, fourteen ClpP subunits assemble into 2 heptameric rings which stack back to back to give a disk-like structure with a central cavity, resembling the structure of eukaryotic proteasomes.

It localises to the cytoplasm. The catalysed reaction is Hydrolysis of proteins to small peptides in the presence of ATP and magnesium. alpha-casein is the usual test substrate. In the absence of ATP, only oligopeptides shorter than five residues are hydrolyzed (such as succinyl-Leu-Tyr-|-NHMec, and Leu-Tyr-Leu-|-Tyr-Trp, in which cleavage of the -Tyr-|-Leu- and -Tyr-|-Trp bonds also occurs).. Its function is as follows. Cleaves peptides in various proteins in a process that requires ATP hydrolysis. Has a chymotrypsin-like activity. Plays a major role in the degradation of misfolded proteins. The sequence is that of ATP-dependent Clp protease proteolytic subunit 2 from Myxococcus xanthus.